The sequence spans 144 residues: MQAGVENLVEQVVSGLGYELVDFELSPKGRLLRVFIDIERGVTVDDCATVSNQLTRVFEVENVDYDRLEVSSPGLDRPLKKLADFERFAGQEIQLRLSLPIGNQRNFVGVLQGVRESSVVLLTEKGELLAPFEEIEKARLVPKF.

The protein belongs to the RimP family.

The protein resides in the cytoplasm. Its function is as follows. Required for maturation of 30S ribosomal subunits. The chain is Ribosome maturation factor RimP from Azoarcus sp. (strain BH72).